Reading from the N-terminus, the 316-residue chain is Nautilin-63 (316 aa).

4 disordered regions span residues 1–26 (IPDLASSRSTLPVLTKGPTGLLGPRG), 149–173 (PFPTSRSTYGPSGSQPGKKGVVTPF), 189–238 (DSRC…GIAS), and 259–278 (PPTSPFFTGPSGYTSDGLNK). The span at 10–26 (TLPVLTKGPTGLLGPRG) shows a compositional bias: low complexity. Composition is skewed to polar residues over residues 152 to 163 (TSRSTYGPSGSQ), 207 to 216 (GHSSPATLNS), and 269 to 278 (SGYTSDGLNK).

Glycosylated; contains mainly glucose, galactose, galactosamine, glucosamine and glucuronic acid. As to expression, component of the acid-soluble organic matrix of nacreous shell layers (at protein level).

Its subcellular location is the secreted. Involved in nacre formation. Affects morphology of calcite crystals in vitro but does not inhibit their formation. Binds chitin. The chain is Nautilin-63 from Nautilus macromphalus (Bellybutton nautilus).